The following is a 211-amino-acid chain: Probable GTP-binding protein EngB (211 aa).

The EngB-type G domain occupies 26 to 200 (SGIEVAFAGR…RQKLDNWFST (175 aa)). GTP-binding positions include 34-41 (GRSNAGKS), 61-65 (GRTQL), 79-82 (DLPG), 146-149 (TKAD), and 179-181 (FSS). 2 residues coordinate Mg(2+): Ser-41 and Thr-63.

Belongs to the TRAFAC class TrmE-Era-EngA-EngB-Septin-like GTPase superfamily. EngB GTPase family. The cofactor is Mg(2+).

In terms of biological role, necessary for normal cell division and for the maintenance of normal septation. In Pectobacterium carotovorum subsp. carotovorum (strain PC1), this protein is Probable GTP-binding protein EngB.